Consider the following 282-residue polypeptide: uncharacterized protein (282 aa).

The next 5 membrane-spanning stretches (helical) occupy residues 9-29 (LLKI…APHG), 43-63 (ISGR…FLYA), 123-143 (VFVS…LYLV), 158-178 (YIGM…DNIL), and 232-252 (LAAG…ILLM).

Belongs to the steroid 5-alpha reductase family.

The protein localises to the endoplasmic reticulum membrane. This is an uncharacterized protein from Schizosaccharomyces pombe (strain 972 / ATCC 24843) (Fission yeast).